The following is a 353-amino-acid chain: tRNA N6-adenosine threonylcarbamoyltransferase (353 aa).

2 residues coordinate Fe cation: His111 and His115. Substrate contacts are provided by residues 134 to 138, Asp167, Gly180, Asp184, and Asn279; that span reads LVSGG. Asp307 serves as a coordination point for Fe cation.

It belongs to the KAE1 / TsaD family. It depends on Fe(2+) as a cofactor.

The protein localises to the cytoplasm. It carries out the reaction L-threonylcarbamoyladenylate + adenosine(37) in tRNA = N(6)-L-threonylcarbamoyladenosine(37) in tRNA + AMP + H(+). Its function is as follows. Required for the formation of a threonylcarbamoyl group on adenosine at position 37 (t(6)A37) in tRNAs that read codons beginning with adenine. Is involved in the transfer of the threonylcarbamoyl moiety of threonylcarbamoyl-AMP (TC-AMP) to the N6 group of A37, together with TsaE and TsaB. TsaD likely plays a direct catalytic role in this reaction. This is tRNA N6-adenosine threonylcarbamoyltransferase from Thermosynechococcus vestitus (strain NIES-2133 / IAM M-273 / BP-1).